The chain runs to 430 residues: Histidine--tRNA ligase (430 aa).

Belongs to the class-II aminoacyl-tRNA synthetase family. As to quaternary structure, homodimer.

It is found in the cytoplasm. It catalyses the reaction tRNA(His) + L-histidine + ATP = L-histidyl-tRNA(His) + AMP + diphosphate + H(+). The protein is Histidine--tRNA ligase of Chlamydia felis (strain Fe/C-56) (Chlamydophila felis).